An 873-amino-acid chain; its full sequence is Kinase suppressor of Ras 1 (873 aa).

Disordered regions lie at residues 1–24 (MDRA…GAAA), 174–230 (EHKM…PGLS), and 251–281 (LHSF…PSRK). A mediates association with membranes region spans residues 1–170 (MDRAALRAAA…ALTCLRKVTG (170 aa)). The span at 206-216 (ASTQGPRSISV) shows a compositional bias: polar residues. 2 positions are modified to phosphothreonine: T256 and T260. At S297 the chain carries Phosphoserine; by MARK3. Residue S320 is modified to Phosphoserine. Residues 333–377 (THRFSTKSWLSQVCNVCQKSMIFGVKCKHCRLKCHNKCTKEAPAC) form a Phorbol-ester/DAG-type zinc finger. H334 serves as a coordination point for Zn(2+). S337 is subject to Phosphoserine. Residues C346, C349, C359, C362, H367, C370, and C377 each coordinate Zn(2+). A Phosphoserine; by MARK3 modification is found at S392. A Phosphothreonine modification is found at T411. Disordered stretches follow at residues 416–473 (LTKK…RFSF) and 506–544 (HEAE…PISR). Low complexity predominate over residues 429-458 (SSSNPSSTTSSTPSSPAPFLTSSNPSSATT). Residues 506 to 519 (HEAEAEEPEAGKSE) show a composition bias toward basic and acidic residues. S518 carries the post-translational modification Phosphoserine. The span at 520–530 (AEDDEEDEVDD) shows a compositional bias: acidic residues. Residues 563–833 (VELGEPIGQG…MDMLERLPKL (271 aa)) enclose the Protein kinase domain. 569 to 577 (IGQGRWGRV) serves as a coordination point for ATP. D683 (proton acceptor) is an active-site residue. The ATP site is built by K685 and D700. S838 carries the phosphoserine modification.

This sequence belongs to the protein kinase superfamily. TKL Ser/Thr protein kinase family. In terms of assembly, homodimer. Heterodimerizes (via N-terminus) with BRAF (via N-terminus) in a MAP2K1/MEK1 or MAP2K2/MEK2-dependent manner. Interacts with MAP2K1/MEK1 and MAP2K2/MEK2. Binding to MAP2K1/MEK1 releases the intramolecular inhibitory interaction between KSR1 N-terminus and kinase domains which is required for the subsequent RSK1 dimerization with BRAF. Identified in a complex with AKAP13, MAP2K1 and BRAF. Interacts with AKAP13 and BRAF. Interacts with RAF and MAPK/ERK, in a Ras-dependent manner. Interacts with 14-3-3 proteins including YWHAB. Interacts with HSP90AA1/HSP90, YWHAE/14-3-3 and CDC37. The binding of 14-3-3 proteins to phosphorylated KSR1 prevents the membrane localization. Interacts with MARK3/C-TAK1. Interacts with PPP2R1A and PPP2CA. Interacts with VRK2. In terms of processing, phosphorylated on Ser-297 and, to a higher extent, on Ser-392 by MARK3. Dephosphorylated on Ser-392 by PPP2CA. Phosphorylated KSR1 is cytoplasmic and dephosphorylated KSR1 is membrane-associated. Phosphorylated by PKA at Ser-838. Phosphorylation at Ser-838 is required for cAMP-dependent activation of MAPK1 and/or MAPK3. Expressed in brain, spleen and testis. Isoform 1 is highly expressed spleen and weakly in testis, and isoform 2 is highly expressed in brain and weakly in testis.

The protein resides in the cytoplasm. The protein localises to the membrane. It is found in the cell membrane. Its subcellular location is the cell projection. It localises to the ruffle membrane. The protein resides in the endoplasmic reticulum membrane. The catalysed reaction is L-seryl-[protein] + ATP = O-phospho-L-seryl-[protein] + ADP + H(+). It catalyses the reaction L-threonyl-[protein] + ATP = O-phospho-L-threonyl-[protein] + ADP + H(+). Part of a multiprotein signaling complex which promotes phosphorylation of Raf family members and activation of downstream MAP kinases. Independently of its kinase activity, acts as MAP2K1/MEK1 and MAP2K2/MEK2-dependent allosteric activator of BRAF; upon binding to MAP2K1/MEK1 or MAP2K2/MEK2, dimerizes with BRAF and promotes BRAF-mediated phosphorylation of MAP2K1/MEK1 and/or MAP2K2/MEK2. Promotes activation of MAPK1 and/or MAPK3, both in response to EGF and to cAMP. Its kinase activity is unsure. Some protein kinase activity has been detected in vitro, however the physiological relevance of this activity is unknown. In Mus musculus (Mouse), this protein is Kinase suppressor of Ras 1 (Ksr1).